Consider the following 103-residue polypeptide: Large ribosomal subunit protein uL24 (103 aa).

This sequence belongs to the universal ribosomal protein uL24 family. Part of the 50S ribosomal subunit.

Functionally, one of two assembly initiator proteins, it binds directly to the 5'-end of the 23S rRNA, where it nucleates assembly of the 50S subunit. In terms of biological role, one of the proteins that surrounds the polypeptide exit tunnel on the outside of the subunit. This Alkaliphilus metalliredigens (strain QYMF) protein is Large ribosomal subunit protein uL24.